The primary structure comprises 343 residues: Anthranilate phosphoribosyltransferase (343 aa).

5-phospho-alpha-D-ribose 1-diphosphate is bound by residues Gly-86, 89-90, Thr-94, 96-99, 114-122, and Ser-126; these read GD, NIST, and KHGNKSASG. Gly-86 contacts anthranilate. Ser-98 is a Mg(2+) binding site. Residue Asn-117 participates in anthranilate binding. Residue Arg-172 coordinates anthranilate. Mg(2+)-binding residues include Asp-231 and Glu-232.

Belongs to the anthranilate phosphoribosyltransferase family. In terms of assembly, homodimer. Mg(2+) is required as a cofactor.

It catalyses the reaction N-(5-phospho-beta-D-ribosyl)anthranilate + diphosphate = 5-phospho-alpha-D-ribose 1-diphosphate + anthranilate. It functions in the pathway amino-acid biosynthesis; L-tryptophan biosynthesis; L-tryptophan from chorismate: step 2/5. Its function is as follows. Catalyzes the transfer of the phosphoribosyl group of 5-phosphorylribose-1-pyrophosphate (PRPP) to anthranilate to yield N-(5'-phosphoribosyl)-anthranilate (PRA). This Prochlorococcus marinus subsp. pastoris (strain CCMP1986 / NIES-2087 / MED4) protein is Anthranilate phosphoribosyltransferase.